Consider the following 233-residue polypeptide: Phosphonates import ATP-binding protein PhnC 1 (233 aa).

An ABC transporter domain is found at 2-227 (LSVSGLTKRY…PAAALDREDI (226 aa)). 34–41 (GRSGAGKT) contributes to the ATP binding site.

This sequence belongs to the ABC transporter superfamily. Phosphonates importer (TC 3.A.1.9.1) family. The complex is composed of two ATP-binding proteins (PhnC), two transmembrane proteins (PhnE) and a solute-binding protein (PhnD).

Its subcellular location is the cell membrane. It catalyses the reaction phosphonate(out) + ATP + H2O = phosphonate(in) + ADP + phosphate + H(+). In terms of biological role, part of the ABC transporter complex PhnCDE involved in phosphonates import. Responsible for energy coupling to the transport system. This is Phosphonates import ATP-binding protein PhnC 1 from Natronomonas pharaonis (strain ATCC 35678 / DSM 2160 / CIP 103997 / JCM 8858 / NBRC 14720 / NCIMB 2260 / Gabara) (Halobacterium pharaonis).